Reading from the N-terminus, the 180-residue chain is Large ribosomal subunit protein uL6 (180 aa).

Belongs to the universal ribosomal protein uL6 family. Part of the 50S ribosomal subunit.

Its function is as follows. This protein binds to the 23S rRNA, and is important in its secondary structure. It is located near the subunit interface in the base of the L7/L12 stalk, and near the tRNA binding site of the peptidyltransferase center. The sequence is that of Large ribosomal subunit protein uL6 from Caldanaerobacter subterraneus subsp. tengcongensis (strain DSM 15242 / JCM 11007 / NBRC 100824 / MB4) (Thermoanaerobacter tengcongensis).